The primary structure comprises 351 residues: MSQARPATLRVAVLGAGSWGTALAAAASRRHPTVLWARDGAQAQAMAARHENTRYLPGVALPHALQVSADLAQALAHLAHDPAHALIILGVPVAGMTPLCTELAARLPALGLQAVPLVWTCKGFEEQTARLPHETVQAALGAMPGLAAGVLSGPSFAREVAQGLPVALTVASGSSAVRDAVTTALHGAAVRIYASTDVVGVEVGGALKNVIAVACGICDGLALGTNARAALITRGLAEMARFGAALGAQQETFAGLTGLGDLVLTATGELSRNRRVGLEIGAGRKLADILASGMTAEGVRCARAARDRARALNIELPITEAVCAVLFEGLSPMTAVSALLAREARPESPTP.

Serine 18, tryptophan 19, arginine 38, and lysine 122 together coordinate NADPH. Sn-glycerol 3-phosphate is bound by residues lysine 122, glycine 153, and serine 155. Position 157 (alanine 157) interacts with NADPH. Sn-glycerol 3-phosphate-binding residues include lysine 208, aspartate 261, serine 271, arginine 272, and asparagine 273. Lysine 208 (proton acceptor) is an active-site residue. Residue arginine 272 coordinates NADPH. Position 297 (glutamate 297) interacts with NADPH.

Belongs to the NAD-dependent glycerol-3-phosphate dehydrogenase family.

The protein localises to the cytoplasm. It carries out the reaction sn-glycerol 3-phosphate + NAD(+) = dihydroxyacetone phosphate + NADH + H(+). The enzyme catalyses sn-glycerol 3-phosphate + NADP(+) = dihydroxyacetone phosphate + NADPH + H(+). It functions in the pathway membrane lipid metabolism; glycerophospholipid metabolism. In terms of biological role, catalyzes the reduction of the glycolytic intermediate dihydroxyacetone phosphate (DHAP) to sn-glycerol 3-phosphate (G3P), the key precursor for phospholipid synthesis. This is Glycerol-3-phosphate dehydrogenase [NAD(P)+] from Bordetella pertussis (strain Tohama I / ATCC BAA-589 / NCTC 13251).